We begin with the raw amino-acid sequence, 768 residues long: WD repeat-containing protein 20 homolog (768 aa).

The segment at 103-122 (ESPEAVAPTSSTYEHHKNEP) is disordered. 4 WD repeats span residues 224–264 (IEKT…ASSN), 302–342 (IGEG…LLAV), 345–384 (SYFGGLLTLSWSPDAKLIATGGEDDLLTVYSVAEKRVVCR), and 454–497 (CSLA…LNQG). The disordered stretch occupies residues 531–608 (VSPGGAGVNA…VNSESSKKQN (78 aa)). The span at 539–553 (NASSDSQSITNNHTT) shows a compositional bias: polar residues. Residues 570-582 (FSKFTSGSSSATS) are compositionally biased toward low complexity. The segment covering 595 to 608 (NGASVNSESSKKQN) has biased composition (polar residues). The WD 5 repeat unit spans residues 646–683 (VSHDRLTVLEFREDCVVTACQEGYICTWGRPGRYQPKR). The disordered stretch occupies residues 684 to 749 (DCINSPGTAS…PNITSPSYRV (66 aa)). Polar residues predominate over residues 688–712 (SPGTASPESGQKPSGSTSAMTSSYG). The span at 724–733 (SRSSSTYSNS) shows a compositional bias: low complexity. The segment covering 734-749 (EQQLRSPNITSPSYRV) has biased composition (polar residues).

Interacts with usp-46; the interaction increases the catalytic activity of usp-46 in the presence of wdr-48. Expressed in several neurons in the head and tail.

In terms of biological role, together with wdr-48, binds to and stimulates the activity of the deubiquitinating enzyme usp-46, leading to deubiquitination and stabilization of the glr-1 glutamate receptor. The protein is WD repeat-containing protein 20 homolog of Caenorhabditis elegans.